We begin with the raw amino-acid sequence, 337 residues long: Thiazole synthase (337 aa).

Positions 1 to 41 are disordered; that stretch reads MSQHPLRPAGSRPGDSPPDGSCPDGLAGGGSAVGGGGGGEA. The span at 10–25 shows a compositional bias: low complexity; the sequence is GSRPGDSPPDGSCPDG. A compositionally biased stretch (gly residues) spans 26–41; it reads LAGGGSAVGGGGGGEA. Catalysis depends on K144, which acts as the Schiff-base intermediate with DXP. 1-deoxy-D-xylulose 5-phosphate-binding positions include G205, 231–232, and 253–254; these read AG and NT. The tract at residues 302 to 337 is disordered; sequence FLGAHPSPASHPSPASPVPSVSRATSPAAVVGEASR. A compositionally biased stretch (low complexity) spans 319-337; sequence VPSVSRATSPAAVVGEASR.

The protein belongs to the ThiG family. Homotetramer. Forms heterodimers with either ThiH or ThiS.

The protein localises to the cytoplasm. The enzyme catalyses [ThiS sulfur-carrier protein]-C-terminal-Gly-aminoethanethioate + 2-iminoacetate + 1-deoxy-D-xylulose 5-phosphate = [ThiS sulfur-carrier protein]-C-terminal Gly-Gly + 2-[(2R,5Z)-2-carboxy-4-methylthiazol-5(2H)-ylidene]ethyl phosphate + 2 H2O + H(+). It participates in cofactor biosynthesis; thiamine diphosphate biosynthesis. In terms of biological role, catalyzes the rearrangement of 1-deoxy-D-xylulose 5-phosphate (DXP) to produce the thiazole phosphate moiety of thiamine. Sulfur is provided by the thiocarboxylate moiety of the carrier protein ThiS. In vitro, sulfur can be provided by H(2)S. The sequence is that of Thiazole synthase from Frankia casuarinae (strain DSM 45818 / CECT 9043 / HFP020203 / CcI3).